Reading from the N-terminus, the 63-residue chain is Large ribosomal subunit protein bL28 (63 aa).

The protein belongs to the bacterial ribosomal protein bL28 family.

The sequence is that of Large ribosomal subunit protein bL28 from Geotalea uraniireducens (strain Rf4) (Geobacter uraniireducens).